The chain runs to 126 residues: Small ribosomal subunit protein uS13c (126 aa).

A disordered region spans residues 95–126 (GLPLRGQNTRTNARTKRGIKKTMAGKKKAPRK). Positions 107–126 (ARTKRGIKKTMAGKKKAPRK) are enriched in basic residues.

It belongs to the universal ribosomal protein uS13 family. Part of the 30S ribosomal subunit.

The protein localises to the plastid. Its subcellular location is the chloroplast. Functionally, located at the top of the head of the 30S subunit, it contacts several helices of the 16S rRNA. This chain is Small ribosomal subunit protein uS13c, found in Gracilaria tenuistipitata var. liui (Red alga).